Consider the following 672-residue polypeptide: MADGSLTGGGLEAAAMAPERMGWAVEQELASLEKGLFQDEDSCSDCSYRDKPGSSLQSFMPEGKTFFPEIFQTNQLLFYERFRAYQDYILADCKASEVQEFTAEFLEKVLEPSGWRAVWHTNVFKVLVEITDVDFAALKAVVRLAEPYLCDSQVSTFTMECMKELLDLKEHRLPLQELWVVFDDSGVFDQTALAIEHVRFFYQNIWRSWDEEEEDEYDYFVRCVEPRLRLHYDILEDRVPSGLIVDYHNLLSQCEESYRKFLNLRSSLSNCNSDSEQENISMVEGLKLYSEMEQLKQKLKLIENPLLRYVFGYQKNSNIQAKGVRSSGQKITHVVSSTMMAGLLRSLLTDRLCQEPGEEEREIQFHSDPLSAINACFEGDTVIVCPGHYVVHGTFSIADSIELEGYGLPDDIVIEKRGKGDTFVDCTGADIKISGIKFVQHDAVEGILIVHRGKTTLENCVLQCETTGVTVRTSAEFLMKNSDLYGAKGAGIEIYPGSQCTLSDNGIHHCKEGILIKDFLDEHYDIPKISMVNNIIHNNEGYGVVLVKPTIFSDLQENAEDGTEENKALKIQTSGEPDVAERVDLEELIECATGKMELCARTDPSEQVEGNCEIVNELIAASTQKGQIKKKRLSELGITQADDNLMSQEMFVGIVGNQFKWNGKGSFGTFLF.

Residue Ala2 is modified to N-acetylalanine. A Phosphoserine modification is found at Ser5. Residue Thr7 is modified to Phosphothreonine. 5 positions are modified to phosphoserine: Ser31, Ser42, Ser44, Ser47, and Ser273. 5 PbH1 repeats span residues Gly428–His451, Arg452–Thr473, Ser474–Pro496, Gly497–Asp518, and Ile526–Lys548. Ser634 bears the Phosphoserine mark.

As to quaternary structure, interacts directly with isoform p52shc of SHC1 via its SH2 domain. Interacts with TRIM71; leading to enhanced SHCBP1 protein stability. Interacts with both members of the centralspindlin complex, KIF23 and RACGAP1.

It is found in the midbody. The protein resides in the cytoplasm. The protein localises to the cytoskeleton. It localises to the spindle. Its function is as follows. May play a role in signaling pathways governing cellular proliferation, cell growth and differentiation. May be a component of a novel signaling pathway downstream of Shc. Acts as a positive regulator of FGF signaling in neural progenitor cells. The protein is SHC SH2 domain-binding protein 1 (SHCBP1) of Homo sapiens (Human).